We begin with the raw amino-acid sequence, 172 residues long: 3-phenylpropionate/cinnamic acid dioxygenase subunit beta (172 aa).

This sequence belongs to the bacterial ring-hydroxylating dioxygenase beta subunit family. This dioxygenase system consists of four proteins: the two subunits of the hydroxylase component (HcaE and HcaF), a ferredoxin (HcaC) and a ferredoxin reductase (HcaD).

It carries out the reaction 3-phenylpropanoate + NADH + O2 + H(+) = 3-(cis-5,6-dihydroxycyclohexa-1,3-dien-1-yl)propanoate + NAD(+). It catalyses the reaction (E)-cinnamate + NADH + O2 + H(+) = (2E)-3-(cis-5,6-dihydroxycyclohexa-1,3-dien-1-yl)prop-2-enoate + NAD(+). The protein operates within aromatic compound metabolism; 3-phenylpropanoate degradation. Its function is as follows. Part of the multicomponent 3-phenylpropionate dioxygenase. Converts 3-phenylpropionic acid (PP) and cinnamic acid (CI) into 3-phenylpropionate-dihydrodiol (PP-dihydrodiol) and cinnamic acid-dihydrodiol (CI-dihydrodiol), respectively. The chain is 3-phenylpropionate/cinnamic acid dioxygenase subunit beta from Escherichia coli O157:H7.